The primary structure comprises 482 residues: Serine carboxypeptidase-like 36 (482 aa).

Positions 1 to 25 (MGKRQDWSVTACIFLFLSLASQIHC) are cleaved as a signal peptide. Disulfide bonds link Cys-119-Cys-363, Cys-275-Cys-286, and Cys-310-Cys-331. The active site involves Ser-210. Asn-228 carries an N-linked (GlcNAc...) asparagine glycan. Asn-312 and Asn-352 each carry an N-linked (GlcNAc...) asparagine glycan. Asp-402 is an active-site residue. N-linked (GlcNAc...) asparagine glycosylation is found at Asn-418 and Asn-444. His-455 is a catalytic residue.

Belongs to the peptidase S10 family. As to expression, expressed in seedlings, flowers and siliques.

The protein localises to the secreted. In terms of biological role, probable carboxypeptidase. This is Serine carboxypeptidase-like 36 (SCPL36) from Arabidopsis thaliana (Mouse-ear cress).